Consider the following 376-residue polypeptide: Guanine nucleotide-binding protein G(s) subunit alpha (376 aa).

Gly-2 carries N-palmitoyl glycine lipidation. Cys-3 is lipidated: S-palmitoyl cysteine. The 341-residue stretch at 36–376 folds into the G-alpha domain; that stretch reads GTHRLLLLGA…RMHLRQYELL (341 aa). The tract at residues 39–52 is G1 motif; it reads RLLLLGAGESGKST. GTP contacts are provided by residues 44 to 51, 180 to 186, 205 to 209, 274 to 277, and Ala-348; these read GAGESGKS, LRCRVLT, DVGGQ, and NKQD. Residues Ser-51 and Thr-186 each contribute to the Mg(2+) site. Positions 178–186 are G2 motif; it reads DILRCRVLT. The segment at 201–210 is G3 motif; it reads FHMFDVGGQR. Positions 270-277 are G4 motif; it reads ILFLNKQD. Residues 346–351 form a G5 motif region; that stretch reads TCAVDT.

The protein belongs to the G-alpha family. G(s) subfamily. As to quaternary structure, g proteins are composed of 3 units; alpha, beta and gamma. The alpha chain contains the guanine nucleotide binding site.

In terms of biological role, guanine nucleotide-binding proteins (G proteins) are involved as modulators or transducers in various transmembrane signaling systems. The G(s) protein is involved in hormonal regulation of adenylate cyclase: it activates the cyclase in response to beta-adrenergic stimuli. The chain is Guanine nucleotide-binding protein G(s) subunit alpha from Lymnaea stagnalis (Great pond snail).